A 215-amino-acid polypeptide reads, in one-letter code: MADS-box transcription factor 4 (215 aa).

The region spanning 1–61 (MGRGKIEIKR…GKLSDYCTPK (61 aa)) is the MADS-box domain. Residues 89–175 (HKSLSAEIDR…AFRVHQQEVE (87 aa)) enclose the K-box domain.

In terms of assembly, may interact with the K-box of MADS16. Highly expressed in lodicules, at intermediate levels in stamens, and weakly in carpels. Expressed in pollen.

It is found in the nucleus. Functionally, probable transcription factor involved in the development of floral organs. B-class protein required for normal development of lodicules and stamens (whorls 2 and 3). May function as a heterodimer with MADS16. The sequence is that of MADS-box transcription factor 4 (MADS4) from Oryza sativa subsp. japonica (Rice).